The sequence spans 122 residues: MVPAPGSRAFPSPVFLGGVFFVFFFRWRGNYKVQQVRLRQYWEFTLWETAPNTKQKNDFFAKTLTYIKLALWPQLKKQSNQRNQRRGPPGERRILTPLRGACQLICSLLMKTETLSVPRILT.

The chain crosses the membrane as a helical span at residues 9–25; sequence AFPSPVFLGGVFFVFFF.

Its subcellular location is the cytoplasm. It is found in the nucleus. The protein localises to the membrane. This is an uncharacterized protein from Saccharomyces cerevisiae (strain ATCC 204508 / S288c) (Baker's yeast).